Here is a 301-residue protein sequence, read N- to C-terminus: Single-stranded DNA-binding protein (301 aa).

Residues 3-7 (KRKST) form an LAST region. The Zn(2+) site is built by His64, Cys77, Cys87, and Cys90. Residues 272-301 (TKTEDDFMSSSSGSSSSADDTDLDDLLNDL) are disordered. Low complexity predominate over residues 279–289 (MSSSSGSSSSA). Over residues 290-301 (DDTDLDDLLNDL) the composition is skewed to acidic residues.

It belongs to the Tequatrovirus single-stranded DNA-binding protein family. Homodimer in the absence of DNA, monomer when binding DNA. Interacts with the DNA helicase assembly protein; a ternary complex between the helicase assembly protein, the single-stranded DNA-binding protein and ssDNA is an obligatory intermediate in the helicase loading mechanism. Part of the replicase complex that includes the DNA polymerase, the polymerase clamp, the clamp loader complex, the single-stranded DNA binding protein, the primase, the DnaB-like SF4 replicative helicase and the helicase assembly factor. Interacts (via C-terminus) with the viral SF1 dDA helicase. Interacts with the viral SF2 UvsW repair helicase.

Its function is as follows. Single-stranded DNA-binding protein that participates in viral DNA replication, recombination, and repair. Coats the lagging-strand ssDNA as the replication fork advances. Stimulates the activities of viral DNA polymerase and DnaB-like SF4 replicative helicase, probably via its interaction with the helicase assembly factor. Stimulates the unwinding activity of UvsW helicase, inhibits it DNA winding activity. Together with DnaB-like SF4 replicative helicase and the helicase assembly factor, promotes pairing of two homologous DNA molecules containing complementary single-stranded regions and mediates homologous DNA strand exchange. Also promotes the formation of joint molecules. mRNA specific autogenous translational repressor. In Escherichia coli (Bacteriophage T4), this protein is Single-stranded DNA-binding protein.